The sequence spans 626 residues: tRNA 5-methylaminomethyl-2-thiouridine biosynthesis bifunctional protein MnmC (626 aa).

Residues 1–237 are tRNA (mnm(5)s(2)U34)-methyltransferase; it reads MKGPQLDYAD…KRDMTVGVFQ (237 aa). The segment at 255 to 626 is FAD-dependent cmnm(5)s(2)U34 oxidoreductase; the sequence is IGSGLSGANV…RVLPNRFSQE (372 aa).

The protein in the N-terminal section; belongs to the methyltransferase superfamily. tRNA (mnm(5)s(2)U34)-methyltransferase family. In the C-terminal section; belongs to the DAO family. FAD is required as a cofactor.

The protein localises to the cytoplasm. It carries out the reaction 5-aminomethyl-2-thiouridine(34) in tRNA + S-adenosyl-L-methionine = 5-methylaminomethyl-2-thiouridine(34) in tRNA + S-adenosyl-L-homocysteine + H(+). Functionally, catalyzes the last two steps in the biosynthesis of 5-methylaminomethyl-2-thiouridine (mnm(5)s(2)U) at the wobble position (U34) in tRNA. Catalyzes the FAD-dependent demodification of cmnm(5)s(2)U34 to nm(5)s(2)U34, followed by the transfer of a methyl group from S-adenosyl-L-methionine to nm(5)s(2)U34, to form mnm(5)s(2)U34. The polypeptide is tRNA 5-methylaminomethyl-2-thiouridine biosynthesis bifunctional protein MnmC (Hahella chejuensis (strain KCTC 2396)).